Reading from the N-terminus, the 322-residue chain is Triosephosphate isomerase, chloroplastic (322 aa).

The transit peptide at 1 to 67 directs the protein to the chloroplast; sequence MAVVSTSLAS…RRCPRGVVAM (67 aa). Positions 78 and 80 each coordinate substrate. The active-site Electrophile is His-162. The active-site Proton acceptor is Glu-232.

Belongs to the triosephosphate isomerase family. In terms of assembly, homodimer.

Its subcellular location is the plastid. It is found in the chloroplast. It carries out the reaction D-glyceraldehyde 3-phosphate = dihydroxyacetone phosphate. Its pathway is carbohydrate biosynthesis; Calvin cycle. This Spinacia oleracea (Spinach) protein is Triosephosphate isomerase, chloroplastic (TPIP1).